A 324-amino-acid chain; its full sequence is Viral cathepsin (324 aa).

The N-terminal stretch at 1 to 18 (MNKIVLYLLIYVGTFSAA) is a signal peptide. The propeptide at 19-113 (YDLLKAPSYF…VVLNRPPDKG (95 aa)) is activation peptide. 3 disulfides stabilise this stretch: C134/C175, C168/C208, and C263/C311. C137 is an active-site residue. N159 is a glycosylation site (N-linked (GlcNAc...) asparagine; by host). Catalysis depends on residues H270 and N290.

It belongs to the peptidase C1 family. In terms of processing, synthesized as an inactive proenzyme and activated by proteolytic removal of the inhibitory propeptide.

The enzyme catalyses Endopeptidase of broad specificity, hydrolyzing substrates of both cathepsin L and cathepsin B.. In terms of biological role, cysteine protease that plays an essential role in host liquefaction to facilitate horizontal transmission of the virus. May participate in the degradation of foreign protein expressed by the baculovirus system. The chain is Viral cathepsin (Vcath) from Choristoneura fumiferana defective polyhedrosis virus (Cfdef).